The following is a 724-amino-acid chain: Phosphoribosylformylglycinamidine synthase subunit PurL (724 aa).

Residue His34 is part of the active site. Tyr37 lines the ATP pocket. Residue Glu78 participates in Mg(2+) binding. Substrate contacts are provided by residues 79–82 and Arg101; that span reads SHNH. His80 (proton acceptor) is an active-site residue. Position 102 (Asp102) interacts with Mg(2+). Gln226 is a binding site for substrate. Residue Asp254 participates in Mg(2+) binding. Residue 298 to 300 participates in substrate binding; the sequence is ESQ. ATP contacts are provided by Asp480 and Gly517. Asn518 is a binding site for Mg(2+). Ser520 provides a ligand contact to substrate.

Belongs to the FGAMS family. In terms of assembly, monomer. Part of the FGAM synthase complex composed of 1 PurL, 1 PurQ and 2 PurS subunits.

Its subcellular location is the cytoplasm. The enzyme catalyses N(2)-formyl-N(1)-(5-phospho-beta-D-ribosyl)glycinamide + L-glutamine + ATP + H2O = 2-formamido-N(1)-(5-O-phospho-beta-D-ribosyl)acetamidine + L-glutamate + ADP + phosphate + H(+). The protein operates within purine metabolism; IMP biosynthesis via de novo pathway; 5-amino-1-(5-phospho-D-ribosyl)imidazole from N(2)-formyl-N(1)-(5-phospho-D-ribosyl)glycinamide: step 1/2. Its function is as follows. Part of the phosphoribosylformylglycinamidine synthase complex involved in the purines biosynthetic pathway. Catalyzes the ATP-dependent conversion of formylglycinamide ribonucleotide (FGAR) and glutamine to yield formylglycinamidine ribonucleotide (FGAM) and glutamate. The FGAM synthase complex is composed of three subunits. PurQ produces an ammonia molecule by converting glutamine to glutamate. PurL transfers the ammonia molecule to FGAR to form FGAM in an ATP-dependent manner. PurS interacts with PurQ and PurL and is thought to assist in the transfer of the ammonia molecule from PurQ to PurL. The sequence is that of Phosphoribosylformylglycinamidine synthase subunit PurL from Methanopyrus kandleri (strain AV19 / DSM 6324 / JCM 9639 / NBRC 100938).